A 117-amino-acid chain; its full sequence is Large ribosomal subunit protein bL17 (117 aa).

Belongs to the bacterial ribosomal protein bL17 family. As to quaternary structure, part of the 50S ribosomal subunit. Contacts protein L32.

This is Large ribosomal subunit protein bL17 from Thermomicrobium roseum (strain ATCC 27502 / DSM 5159 / P-2).